The primary structure comprises 398 residues: Probable peptidoglycan glycosyltransferase FtsW (398 aa).

At 1-25 (MCYGGTAMMAFADIKEALTPKPSAQ) the chain is on the cytoplasmic side. The chain crosses the membrane as a helical span at residues 26–46 (LYDVPLLYCMLMLMGVGFVMV). Residues 47 to 69 (TSASMPTADRLFGNIYHFTIRHG) lie on the Periplasmic side of the membrane. A helical membrane pass occupies residues 70 to 90 (IFLALSFCLFWITTSVPMSWW). Residue Lys91 is a topological domain, cytoplasmic. A helical transmembrane segment spans residues 92 to 112 (KANPYLLLVGLGLLLIVLIVG). Over 113 to 120 (REVNGSTR) the chain is Periplasmic. A helical transmembrane segment spans residues 121-141 (WIPIGPFNIQASELAKLFFFS). The Cytoplasmic portion of the chain corresponds to 142–156 (YISGYLVRKRSEVQE). The helical transmembrane segment at 157-177 (NIKGFIKPILVFAAYAGLILM) threads the bilayer. Residues 178 to 179 (QP) lie on the Periplasmic side of the membrane. The chain crosses the membrane as a helical span at residues 180–200 (DLGTVVVMFVTTVGLLFLAGA). Position 201 (Lys201) is a topological domain, cytoplasmic. Residues 202–222 (LWQFFVLILTGVALVIGLIVL) form a helical membrane-spanning segment. Residues 223-289 (EPYRMARVIG…DFIFAVIAEE (67 aa)) are Periplasmic-facing. A helical transmembrane segment spans residues 290 to 312 (LGFVGVSSILIVLGTLVFRALLI). Residues 313–324 (GQNALKNGKEYE) are Cytoplasmic-facing. Residues 325-345 (GYLALAIGIWFAFQTMVNVGA) form a helical membrane-spanning segment. Topologically, residues 346–356 (SAGILPTKGLT) are periplasmic. A helical membrane pass occupies residues 357 to 377 (LPFISYGGSSLLMMTIAAGIL). Residues 378–398 (LRVDFETKMATKQATSGGAKR) lie on the Cytoplasmic side of the membrane.

Belongs to the SEDS family. FtsW subfamily.

It is found in the cell inner membrane. It catalyses the reaction [GlcNAc-(1-&gt;4)-Mur2Ac(oyl-L-Ala-gamma-D-Glu-L-Lys-D-Ala-D-Ala)](n)-di-trans,octa-cis-undecaprenyl diphosphate + beta-D-GlcNAc-(1-&gt;4)-Mur2Ac(oyl-L-Ala-gamma-D-Glu-L-Lys-D-Ala-D-Ala)-di-trans,octa-cis-undecaprenyl diphosphate = [GlcNAc-(1-&gt;4)-Mur2Ac(oyl-L-Ala-gamma-D-Glu-L-Lys-D-Ala-D-Ala)](n+1)-di-trans,octa-cis-undecaprenyl diphosphate + di-trans,octa-cis-undecaprenyl diphosphate + H(+). It functions in the pathway cell wall biogenesis; peptidoglycan biosynthesis. In terms of biological role, peptidoglycan polymerase that is essential for cell division. The protein is Probable peptidoglycan glycosyltransferase FtsW of Pseudoalteromonas translucida (strain TAC 125).